The sequence spans 98 residues: Complement inhibitor RaCI2 (98 aa).

The signal sequence occupies residues 1 to 21; the sequence is MNAVTVLAFTAFALIVHDCYS. 3 disulfide bridges follow: Cys-35-Cys-59, Cys-40-Cys-61, and Cys-55-Cys-76.

It belongs to the RaCI family. In terms of tissue distribution, expressed in salivary glands.

The protein resides in the secreted. Functionally, complement inhibitor. Prevents complement-mediated C5 activation by binding to C5. Binds C5 at a different binding site than the other tick complement inhibitors OmCI and CirpT1, and the drug eculizumab. The protein is Complement inhibitor RaCI2 of Rhipicephalus microplus (Cattle tick).